The primary structure comprises 553 residues: Glucose-6-phosphate isomerase (553 aa).

Catalysis depends on Glu357, which acts as the Proton donor. Residues His388 and Lys514 contribute to the active site. The disordered stretch occupies residues 527–553 (ADSPAAQSDSSTDALVRRYRTERGRTA). Over residues 541–553 (LVRRYRTERGRTA) the composition is skewed to basic and acidic residues.

It belongs to the GPI family.

The protein localises to the cytoplasm. It carries out the reaction alpha-D-glucose 6-phosphate = beta-D-fructose 6-phosphate. Its pathway is carbohydrate biosynthesis; gluconeogenesis. It functions in the pathway carbohydrate degradation; glycolysis; D-glyceraldehyde 3-phosphate and glycerone phosphate from D-glucose: step 2/4. Catalyzes the reversible isomerization of glucose-6-phosphate to fructose-6-phosphate. This Mycolicibacterium vanbaalenii (strain DSM 7251 / JCM 13017 / BCRC 16820 / KCTC 9966 / NRRL B-24157 / PYR-1) (Mycobacterium vanbaalenii) protein is Glucose-6-phosphate isomerase.